The primary structure comprises 654 residues: MNIIFLKVPSIFKKLNVGNIKILNVNQNSPSIIVNSNNTKSIKNHNYSSFTNNNNNNNKNQVNLVQNKSILSSSSSYKGNNNNNNKLSYTTSSNNNNNNKIEEIVKSTTVSPFTPLNILHPKLVGEKLYSNDNEANNNQKEFKAEISTLPNGIRVVSKQTHEGVCAIGLYINAGTKYESPQDRGVFNLLEKMTFKETKNNSTSEIIKELEEISMNAMASSSREMINVSLEVLRKDLEFVLSILSDQIKSPTYSEEELREQIEVCIRNYEMITNSSSDQLMTEILMGVAFGDAGLGNLVIATPEQYQNITREKLFDALRKYYVGKNIVISVTGAEHSQVIELVDKYFGDIPFTQKDTPSEDSIDSTITYKGGTDACVAGLIHKNHLKSQLQFLIEKQQKLKQQQQQQQPQPQNSNIDDNDNEEELLNLEIEQTKISIEQLELQQVKESSWIIAFPHSGLSTVAENKDIINGLVLQSLLGGGSSYSTGGPGKGMQSRLNLNVVYSSHRVKNCHAFLFVFNKVSLFGISLTTQSGFLQDGIELVLQELLMLRSSMTQQELERAKRSQKSQILQNLEMRSVQCDDMARHILSFGSYKSPEQICKLIDSVTLDDIKKLISKLAQSNPSVVSIVANENEPILTAEQYNQIVKQNSSTLFK.

The tract at residues Ser73–Asn94 is disordered. Residues His381 to Glu446 are a coiled coil.

Belongs to the peptidase M16 family. Heterodimer of alpha and beta subunits, forming the mitochondrial processing protease (MPP) in which subunit alpha is involved in substrate recognition and binding and subunit beta is the catalytic subunit.

Its subcellular location is the mitochondrion matrix. In terms of biological role, substrate recognition and binding subunit of the essential mitochondrial processing protease (MPP), which cleaves the mitochondrial sequence off newly imported precursors proteins. The chain is Mitochondrial-processing peptidase subunit alpha-1 (mppA1) from Dictyostelium discoideum (Social amoeba).